An 80-amino-acid chain; its full sequence is Large ribosomal subunit protein uL24 (80 aa).

This sequence belongs to the universal ribosomal protein uL24 family. Part of the 50S ribosomal subunit.

Functionally, one of two assembly initiator proteins, it binds directly to the 5'-end of the 23S rRNA, where it nucleates assembly of the 50S subunit. One of the proteins that surrounds the polypeptide exit tunnel on the outside of the subunit. The chain is Large ribosomal subunit protein uL24 from Chlorobaculum tepidum (strain ATCC 49652 / DSM 12025 / NBRC 103806 / TLS) (Chlorobium tepidum).